The following is a 167-amino-acid chain: Photosystem I assembly protein Ycf3 (167 aa).

TPR repeat units lie at residues 35–68, 72–105, and 120–153; these read AFAY…EVDA, SYIL…NPSL, and GEQA…APTS.

This sequence belongs to the Ycf3 family.

The protein resides in the plastid. It is found in the chloroplast thylakoid membrane. Essential for the assembly of the photosystem I (PSI) complex. May act as a chaperone-like factor to guide the assembly of the PSI subunits. The sequence is that of Photosystem I assembly protein Ycf3 from Chlorokybus atmophyticus (Soil alga).